A 253-amino-acid chain; its full sequence is HTH-type transcriptional regulator YdeO (253 aa).

The region spanning 137-233 (GKVRNIVNMK…GNSPKRVSKE (97 aa)) is the HTH araC/xylS-type domain. 2 DNA-binding regions (H-T-H motif) span residues 154–175 (KDIC…KQEQ) and 200–223 (VNKI…RKHF).

Induces the expression of gadE and mdtEF. Could also regulate the expression of other genes involved in acid resistance. The chain is HTH-type transcriptional regulator YdeO (ydeO) from Escherichia coli (strain K12).